The primary structure comprises 950 residues: Translation initiation factor IF-2 (950 aa).

Disordered stretches follow at residues L57 to I254 and D304 to S328. Low complexity-rich tracts occupy residues A101–A131 and A139–A169. Residues P170–R215 show a composition bias toward pro residues. Low complexity predominate over residues P216–Q233. One can recognise a tr-type G domain in the interval I449–K618. Residues G458–T465 are G1. G458–T465 contacts GTP. The G2 stretch occupies residues G483–H487. The G3 stretch occupies residues D504–G507. GTP is bound by residues D504–H508 and N558–D561. The tract at residues N558–D561 is G4. The G5 stretch occupies residues S594–R596.

The protein belongs to the TRAFAC class translation factor GTPase superfamily. Classic translation factor GTPase family. IF-2 subfamily.

The protein resides in the cytoplasm. Functionally, one of the essential components for the initiation of protein synthesis. Protects formylmethionyl-tRNA from spontaneous hydrolysis and promotes its binding to the 30S ribosomal subunits. Also involved in the hydrolysis of GTP during the formation of the 70S ribosomal complex. The polypeptide is Translation initiation factor IF-2 (Anaeromyxobacter dehalogenans (strain 2CP-C)).